The primary structure comprises 324 residues: Glyoxylate/hydroxypyruvate reductase B (324 aa).

Residues Arg237 and Glu266 contribute to the active site. Catalysis depends on His285, which acts as the Proton donor.

It belongs to the D-isomer specific 2-hydroxyacid dehydrogenase family. GhrB subfamily. As to quaternary structure, homodimer.

The protein resides in the cytoplasm. The catalysed reaction is glycolate + NADP(+) = glyoxylate + NADPH + H(+). The enzyme catalyses (R)-glycerate + NAD(+) = 3-hydroxypyruvate + NADH + H(+). It carries out the reaction (R)-glycerate + NADP(+) = 3-hydroxypyruvate + NADPH + H(+). Catalyzes the NADPH-dependent reduction of glyoxylate and hydroxypyruvate into glycolate and glycerate, respectively. This is Glyoxylate/hydroxypyruvate reductase B from Escherichia coli O9:H4 (strain HS).